We begin with the raw amino-acid sequence, 249 residues long: AA9 family lytic polysaccharide monooxygenase A (249 aa).

An N-terminal signal peptide occupies residues 1–21 (MALSKIAALSTILASASLVAG). Cu(2+) is bound at residue His-22. His-22 is modified (methylhistidine). N-linked (GlcNAc...) asparagine glycosylation is found at Asn-34 and Asn-80. 2 cysteine pairs are disulfide-bonded: Cys-77–Cys-199 and Cys-118–Cys-122. His-107 contacts Cu(2+). 2 residues coordinate O2: His-185 and Gln-194. Position 196 (Tyr-196) interacts with Cu(2+).

The protein belongs to the polysaccharide monooxygenase AA9 family. Cu(2+) serves as cofactor. In terms of processing, the catalytically essential N-terminal histidine His-22 is post-translationally modified by methylation to prevent protonation of the histidine side chain, and protect the critical active site of the enzyme from oxidative damage.

It localises to the secreted. The catalysed reaction is [(1-&gt;4)-beta-D-glucosyl]n+m + reduced acceptor + O2 = 4-dehydro-beta-D-glucosyl-[(1-&gt;4)-beta-D-glucosyl]n-1 + [(1-&gt;4)-beta-D-glucosyl]m + acceptor + H2O.. Functionally, lytic polysaccharide monooxygenase (LPMO) that exhibits a mixed C1/C4 oxidative cleavage activity on cellulose and xyloglucan. Catalysis by LPMOs requires the reduction of the active-site copper from Cu(II) to Cu(I) by a reducing agent and H(2)O(2) or O(2) as a cosubstrate. Shows a higher boosting effect with cellulases on the enzymatic saccharification of complex lignocellulosic substrates associated with xyloglucan than on the lignocellulosic substrates without xyloglucan. The oxidative cleavage of xyloglucan by LPMO9A may facilitate to open up the sterical hindrance of cellulose by xyloglucan and thereby increase accessibility for cellulase to lignocellulosic substrates. The polypeptide is AA9 family lytic polysaccharide monooxygenase A (Penicillium parvum (Eupenicillium parvum)).